A 30-amino-acid chain; its full sequence is Cyclotide cter-P (30 aa).

Positions 1–30 (GIPCGESCVFIPCITAAIGCSCKSKVCYRN) form a cross-link, cyclopeptide (Gly-Asn). Disulfide bonds link cysteine 4-cysteine 20, cysteine 8-cysteine 22, and cysteine 13-cysteine 27.

In terms of processing, this is a cyclic peptide.

The protein localises to the secreted. In terms of biological role, probably participates in a plant defense mechanism. The protein is Cyclotide cter-P of Clitoria ternatea (Butterfly pea).